A 320-amino-acid polypeptide reads, in one-letter code: AA9 family lytic polysaccharide monooxygenase-like protein CEL1 (320 aa).

The signal sequence occupies residues methionine 1 to alanine 29. Cystine bridges form between cysteine 78–cysteine 199 and cysteine 121–cysteine 126. Position 109 (histidine 109) interacts with Cu(2+). An N-linked (GlcNAc...) asparagine glycan is attached at asparagine 163. The O2 site is built by histidine 189 and glutamine 194. Position 196 (tyrosine 196) interacts with Cu(2+). Residues glycine 255–glycine 284 form a disordered region. Residues serine 262–threonine 274 are compositionally biased toward low complexity. The 37-residue stretch at glycine 284 to leucine 320 folds into the CBM1 domain.

The protein belongs to the polysaccharide monooxygenase AA9 family. Cu(2+) serves as cofactor.

The protein localises to the secreted. The catalysed reaction is [(1-&gt;4)-beta-D-glucosyl]n+m + reduced acceptor + O2 = 4-dehydro-beta-D-glucosyl-[(1-&gt;4)-beta-D-glucosyl]n-1 + [(1-&gt;4)-beta-D-glucosyl]m + acceptor + H2O.. Lytic polysaccharide monooxygenase (LPMO)-like protein that binds strongly to cellulose. Seems not to acts as an endoglucanase, a ceUobiohydrolase able to hydrolyze fluorogenic cellobiosides, a /3-glucosidase, a xylanase, nor a cellobiose:quinone oxidoreductase. The protein is AA9 family lytic polysaccharide monooxygenase-like protein CEL1 of Agaricus bisporus (White button mushroom).